The following is a 1023-amino-acid chain: Sodium/potassium-transporting ATPase subunit alpha-1 (1023 aa).

Positions 1-5 (MGKGV) are excised as a propeptide. Residues 1 to 11 (MGKGVGRDKYE) are compositionally biased toward basic and acidic residues. The disordered stretch occupies residues 1-39 (MGKGVGRDKYEPAAVSEQGDKKGKKGKKDRDMDELKKEV). The Cytoplasmic portion of the chain corresponds to 6 to 87 (GRDKYEPAAV…NALTPPPTTP (82 aa)). Lysine 9 bears the N6-acetyllysine mark. Tyrosine 10 is subject to Phosphotyrosine. Serine 16 carries the phosphoserine modification. Lysine 21 carries the N6-acetyllysine modification. The segment covering 28-39 (KDRDMDELKKEV) has biased composition (basic and acidic residues). Phosphoserine occurs at positions 40 and 47. The tract at residues 82 to 84 (PPP) is phosphoinositide-3 kinase binding. Residues 88–108 (EWIKFCRQLFGGFSMLLWIGA) form a helical membrane-spanning segment. Topologically, residues 109-131 (ILCFLAYSIQAATEEEPQNDNLY) are extracellular. The chain crosses the membrane as a helical span at residues 132–152 (LGVVLSAVVIITGCFSYYQEA). The Cytoplasmic segment spans residues 153–288 (KSSKIMESFK…GGQTPIAAEI (136 aa)). The tract at residues 216–235 (SSLTGESEPQTRSPDFTNEN) is disordered. Serine 228 is subject to Phosphoserine. Residue tyrosine 260 is modified to Phosphotyrosine. The helical transmembrane segment at 289 to 308 (EHFIHIITGVAVFLGVSFFI) threads the bilayer. Residues 309–320 (LSLILEYTWLEA) are Extracellular-facing. Residues 321-338 (VIFLIGIIVANVPEGLLA) form a helical membrane-spanning segment. Residues 339-772 (TVTVCLTLTA…EEGRLIFDNL (434 aa)) lie on the Cytoplasmic side of the membrane. Catalysis depends on aspartate 376, which acts as the 4-aspartylphosphate intermediate. Phosphoserine is present on residues serine 452 and serine 484. Residue lysine 487 participates in ATP binding. Residue tyrosine 542 is modified to Phosphotyrosine. Residues 596 to 717 (RAAVPDAVGK…QGAIVAVTGD (122 aa)) are mediates interaction with SCN7A. Residue lysine 661 is modified to N6-succinyllysine. Phosphoserine is present on residues serine 668 and serine 675. The Mg(2+) site is built by aspartate 717 and aspartate 721. A helical transmembrane segment spans residues 773–792 (KKSIAYTLTSNIPEITPFLI). Residues 793-802 (FIIANIPLPL) lie on the Extracellular side of the membrane. Residues 803 to 823 (GTVTILCIDLGTDMVPAISLA) traverse the membrane as a helical segment. Topologically, residues 824–843 (YEQAESDIMKRQPRNPKTDK) are cytoplasmic. A helical membrane pass occupies residues 844-866 (LVNERLISMAYGQIGMIQALGGF). At 867-918 (FTYFVILAENGFLPIHLLGLRVDWDDRWINDVEDSYGQQWTYEQRKIVEFTC) the chain is on the extracellular side. The chain crosses the membrane as a helical span at residues 919-938 (HTAFFVSIVVVQWADLVICK). Residues 939–951 (TRRNSVFQQGMKN) are Cytoplasmic-facing. Serine 943 carries the phosphoserine; by PKA modification. A helical transmembrane segment spans residues 952–970 (KILIFGLFEETALAAFLSY). At 971–985 (CPGMGVALRMYPLKP) the chain is on the extracellular side. Residues 986 to 1006 (TWWFCAFPYSLLIFVYDEVRK) traverse the membrane as a helical segment. At 1007-1023 (LIIRRRPGGWVEKETYY) the chain is on the cytoplasmic side.

This sequence belongs to the cation transport ATPase (P-type) (TC 3.A.3) family. Type IIC subfamily. The sodium/potassium-transporting ATPase is composed of a catalytic alpha subunit, an auxiliary non-catalytic beta subunit and an additional regulatory subunit. Interacts with regulatory subunit FXYD1. Interacts with regulatory subunit FXYD3. Interacts with SIK1. Binds the HLA class II histocompatibility antigen DR1. Interacts with SLC35G1 and STIM1. Interacts with CLN3; this interaction regulates the sodium/potassium-transporting ATPase complex localization at the plasma membrane. Interacts with SCN7A; activates ATP1A1 P-type sodium:potassium-exchanging transporter activity which indirectly signals to nearby neurons to regulate sodium homeostasis. In terms of processing, phosphorylation on Tyr-10 modulates pumping activity. Phosphorylation of Ser-943 by PKA modulates the response of ATP1A1 to PKC. Dephosphorylation by protein phosphatase 2A (PP2A) following increases in intracellular sodium, leading to increase catalytic activity.

The protein resides in the cell membrane. It is found in the basolateral cell membrane. The protein localises to the sarcolemma. Its subcellular location is the cell projection. It localises to the axon. The protein resides in the melanosome. It carries out the reaction K(+)(out) + Na(+)(in) + ATP + H2O = K(+)(in) + Na(+)(out) + ADP + phosphate + H(+). In terms of biological role, this is the catalytic component of the active enzyme, which catalyzes the hydrolysis of ATP coupled with the exchange of sodium and potassium ions across the plasma membrane. This action creates the electrochemical gradient of sodium and potassium ions, providing the energy for active transport of various nutrients. Could also be part of an osmosensory signaling pathway that senses body-fluid sodium levels and controls salt intake behavior as well as voluntary water intake to regulate sodium homeostasis. This is Sodium/potassium-transporting ATPase subunit alpha-1 (ATP1A1) from Homo sapiens (Human).